Reading from the N-terminus, the 315-residue chain is Ribosomal RNA small subunit methyltransferase H (315 aa).

S-adenosyl-L-methionine-binding positions include 37–39 (GGH), Asp-57, Phe-83, Asp-105, and Gln-112.

This sequence belongs to the methyltransferase superfamily. RsmH family.

It localises to the cytoplasm. The catalysed reaction is cytidine(1402) in 16S rRNA + S-adenosyl-L-methionine = N(4)-methylcytidine(1402) in 16S rRNA + S-adenosyl-L-homocysteine + H(+). Specifically methylates the N4 position of cytidine in position 1402 (C1402) of 16S rRNA. The sequence is that of Ribosomal RNA small subunit methyltransferase H from Pseudomonas fluorescens (strain SBW25).